A 285-amino-acid polypeptide reads, in one-letter code: Nucleotide-binding protein Avin_12760 (285 aa).

Position 8–15 (8–15 (GRSGSGKS)) interacts with ATP. Residue 60–63 (DARN) participates in GTP binding.

The protein belongs to the RapZ-like family.

Functionally, displays ATPase and GTPase activities. This Azotobacter vinelandii (strain DJ / ATCC BAA-1303) protein is Nucleotide-binding protein Avin_12760.